A 321-amino-acid chain; its full sequence is GDP-L-fucose synthase (321 aa).

14 to 20 (GGSGLVG) lines the NADP(+) pocket. The Proton donor/acceptor role is filled by Y143. Residues K147, 170-173 (PTNV), and H186 contribute to the NADP(+) site. Substrate is bound by residues K194, W208, R215, and D277.

Belongs to the NAD(P)-dependent epimerase/dehydratase family. Fucose synthase subfamily. In terms of assembly, homodimer.

The enzyme catalyses GDP-beta-L-fucose + NADP(+) = GDP-4-dehydro-alpha-D-rhamnose + NADPH + H(+). Its pathway is nucleotide-sugar biosynthesis; GDP-L-fucose biosynthesis via de novo pathway; GDP-L-fucose from GDP-alpha-D-mannose: step 2/2. Functionally, catalyzes the two-step NADP-dependent conversion of GDP-4-dehydro-6-deoxy-D-mannose to GDP-fucose, involving an epimerase and a reductase reaction. This Pongo abelii (Sumatran orangutan) protein is GDP-L-fucose synthase (GFUS).